Here is a 125-residue protein sequence, read N- to C-terminus: Holo-[acyl-carrier-protein] synthase (125 aa).

Residues aspartate 8 and glutamate 57 each contribute to the Mg(2+) site.

The protein belongs to the P-Pant transferase superfamily. AcpS family. Mg(2+) serves as cofactor.

The protein localises to the cytoplasm. It catalyses the reaction apo-[ACP] + CoA = holo-[ACP] + adenosine 3',5'-bisphosphate + H(+). Its function is as follows. Transfers the 4'-phosphopantetheine moiety from coenzyme A to a Ser of acyl-carrier-protein. The sequence is that of Holo-[acyl-carrier-protein] synthase from Dechloromonas aromatica (strain RCB).